We begin with the raw amino-acid sequence, 246 residues long: Large ribosomal subunit protein uL30-like 1 (246 aa).

Position 54 is a phosphoserine (S54).

This sequence belongs to the universal ribosomal protein uL30 family.

This chain is Large ribosomal subunit protein uL30-like 1 (Rpl7l1), found in Mus musculus (Mouse).